Here is a 605-residue protein sequence, read N- to C-terminus: Exo-beta-1,3-glucanase (605 aa).

A disordered region spans residues 1 to 23 (MHVPPTDPARSAPPASPHRRRRP). Positions 1-44 (MHVPPTDPARSAPPASPHRRRRPKALGLTALAAAMLMAVPTTQA) are cleaved as a signal peptide. Substrate contacts are provided by residues Gln174, 194 to 196 (YGW), Gln217, 446 to 449 (WRAD), and 480 to 481 (EH). Residue Glu502 is the Proton donor of the active site. Tyr505 contributes to the substrate binding site.

Belongs to the glycosyl hydrolase 55 family.

It localises to the secreted. The enzyme catalyses Successive hydrolysis of beta-D-glucose units from the non-reducing ends of (1-&gt;3)-beta-D-glucans, releasing alpha-glucose.. Functionally, exo-beta-1,3-glucanase that specifically hydrolyzes laminarin and laminarioligosaccharides, producing glucose and laminaribiose as end products. The chain is Exo-beta-1,3-glucanase from Streptomyces sp. (strain SirexAA-E / ActE).